Consider the following 946-residue polypeptide: Nonribosomal peptide synthetase pngA (946 aa).

The interval 32–450 (AIASREPTRY…AGREKDSIIV (419 aa)) is adenylation (A) domain. Residues 580 to 659 (QPRSGLEQSL…TLSDALKQHA (80 aa)) form the Carrier domain. Residue serine 618 is modified to O-(pantetheine 4'-phosphoryl)serine. Residues 681 to 933 (PIWLVHPVGG…ILDAENIFSF (253 aa)) are thioesterase (TE) domain.

Belongs to the NRP synthetase family.

The enzyme catalyses 2 3-phenylpyruvate + H(+) = phenguignardate + H2O. In terms of biological role, nonribosomal peptide synthetase that mediates the biosynthesis of phenguignardic acid. PngA alone is sufficient for phenguignardic acid synthesis. PngA first activates phenylpyruvic acid (PPA) through its A domain to AMP-PPA. The PPA unit is then loaded to the T domain and eventually transferred to the TE domain. Another PPA unit is then loaded onto the T domain. The TE domain likely promotes the enolate formation on the attached unit, followed by a nucleophilic attack on the carbonyl to yield an ether linkage between the two units. Finally, the TE domain probably catalyzes a similar reaction to give the cyclized dioxolanone core and releases phenguignardic acid. This chain is Nonribosomal peptide synthetase pngA, found in Aspergillus terreus (strain NIH 2624 / FGSC A1156).